The primary structure comprises 553 residues: Thermosome subunit beta (553 aa).

The tract at residues 534–553 (KKSEGKTGEKKESEKGKEED) is disordered.

Belongs to the TCP-1 chaperonin family. In terms of assembly, forms a Heterooligomeric complex of two stacked eight-membered rings.

In terms of biological role, molecular chaperone; binds unfolded polypeptides in vitro, and has a weak ATPase activity. This Sulfolobus acidocaldarius (strain ATCC 33909 / DSM 639 / JCM 8929 / NBRC 15157 / NCIMB 11770) protein is Thermosome subunit beta (thsB).